The following is a 274-amino-acid chain: Putative HTH-type transcriptional regulator RmpR (274 aa).

Residues 18–88 enclose the HTH gntR-type domain; sequence IERADAIVER…RSGGTFVVNQ (71 aa). Positions 46 to 65 form a DNA-binding region, H-T-H motif; sequence EAALSEMFGVGGATLREALS. The span at 250-265 shows a compositional bias: polar residues; sequence SRPSSPATAPDGSSSA. The interval 250 to 274 is disordered; the sequence is SRPSSPATAPDGSSSAEAAMIQEGQ.

Its function is as follows. May regulate the transcription of the rmpAB operon. This Mycobacterium gastri protein is Putative HTH-type transcriptional regulator RmpR (rmpR).